The following is a 680-amino-acid chain: Probable galacturonosyltransferase 3 (680 aa).

Residues 1–6 (MTTFST) are Cytoplasmic-facing. Residues 7-27 (CAAFLSLVVVLHAVHVGGAIL) form a helical; Signal-anchor for type II membrane protein membrane-spanning segment. Residues 28–680 (ESQAPHRELK…PYLRRCDINE (653 aa)) are Lumenal-facing. Residues 118-146 (SFQNDTGMEDNASHSTTNQTDESENQFPN) form a disordered region. Residues Asn-121, Asn-128, Asn-135, Asn-239, Asn-386, Asn-438, Asn-545, Asn-578, Asn-610, and Asn-631 are each glycosylated (N-linked (GlcNAc...) asparagine). The span at 130 to 145 (SHSTTNQTDESENQFP) shows a compositional bias: polar residues.

Belongs to the glycosyltransferase 8 family. As to expression, expressed in roots, inflorescences, siliques, leaves and stems.

The protein localises to the golgi apparatus membrane. It functions in the pathway glycan metabolism; pectin biosynthesis. Its function is as follows. May be involved in pectin and/or xylans biosynthesis in cell walls. The polypeptide is Probable galacturonosyltransferase 3 (GAUT3) (Arabidopsis thaliana (Mouse-ear cress)).